The chain runs to 428 residues: Enolase (428 aa).

Gln163 lines the (2R)-2-phosphoglycerate pocket. Glu205 acts as the Proton donor in catalysis. 3 residues coordinate Mg(2+): Asp242, Glu283, and Asp310. Lys335, Arg364, Ser365, and Lys386 together coordinate (2R)-2-phosphoglycerate. The active-site Proton acceptor is the Lys335.

Belongs to the enolase family. Mg(2+) serves as cofactor.

The protein resides in the cytoplasm. The protein localises to the secreted. It is found in the cell surface. It catalyses the reaction (2R)-2-phosphoglycerate = phosphoenolpyruvate + H2O. The protein operates within carbohydrate degradation; glycolysis; pyruvate from D-glyceraldehyde 3-phosphate: step 4/5. In terms of biological role, catalyzes the reversible conversion of 2-phosphoglycerate (2-PG) into phosphoenolpyruvate (PEP). It is essential for the degradation of carbohydrates via glycolysis. This chain is Enolase, found in Saccharopolyspora erythraea (strain ATCC 11635 / DSM 40517 / JCM 4748 / NBRC 13426 / NCIMB 8594 / NRRL 2338).